We begin with the raw amino-acid sequence, 260 residues long: tRNA pseudouridine synthase A (260 aa).

Asp-51 acts as the Nucleophile in catalysis. Tyr-109 lines the substrate pocket.

The protein belongs to the tRNA pseudouridine synthase TruA family. As to quaternary structure, homodimer.

It catalyses the reaction uridine(38/39/40) in tRNA = pseudouridine(38/39/40) in tRNA. Functionally, formation of pseudouridine at positions 38, 39 and 40 in the anticodon stem and loop of transfer RNAs. The chain is tRNA pseudouridine synthase A from Albidiferax ferrireducens (strain ATCC BAA-621 / DSM 15236 / T118) (Rhodoferax ferrireducens).